A 102-amino-acid polypeptide reads, in one-letter code: Small ribosomal subunit protein uS10 (102 aa).

This sequence belongs to the universal ribosomal protein uS10 family. In terms of assembly, part of the 30S ribosomal subunit.

Its function is as follows. Involved in the binding of tRNA to the ribosomes. This Nocardioides sp. (strain ATCC BAA-499 / JS614) protein is Small ribosomal subunit protein uS10.